The following is a 471-amino-acid chain: Probable pyruvate, phosphate dikinase regulatory protein, chloroplastic (471 aa).

The N-terminal 49 residues, 1-49, are a transit peptide targeting the chloroplast; the sequence is MSSSSSTSPRFGSMISAKLASPPPSLLLPPSPRLQGRRLTPPSCTPGTP. Residues 1–133 form a disordered region; it reads MSSSSSTSPR…PHPSSDEAAS (133 aa). The segment covering 21–32 has biased composition (pro residues); the sequence is SPPPSLLLPPSP. The span at 71-88 shows a compositional bias: polar residues; it reads GSATTPRSPAQLGSSQLH. Basic residues predominate over residues 89 to 99; sequence RWSRARAHRSG. Over residues 100–111 the composition is skewed to basic and acidic residues; the sequence is RRLEWPTIRDRG. 171-178 is an ADP binding site; it reads HSVNAALG.

Belongs to the pyruvate, phosphate/water dikinase regulatory protein family. PDRP subfamily.

It is found in the plastid. It localises to the chloroplast. It carries out the reaction N(tele)-phospho-L-histidyl/L-threonyl-[pyruvate, phosphate dikinase] + ADP = N(tele)-phospho-L-histidyl/O-phospho-L-threonyl-[pyruvate, phosphate dikinase] + AMP + H(+). The catalysed reaction is N(tele)-phospho-L-histidyl/O-phospho-L-threonyl-[pyruvate, phosphate dikinase] + phosphate + H(+) = N(tele)-phospho-L-histidyl/L-threonyl-[pyruvate, phosphate dikinase] + diphosphate. Its activity is regulated as follows. Regulated by light/dark exposure. Its function is as follows. Bifunctional serine/threonine kinase and phosphorylase involved in the dark/light-mediated regulation of PPDK by catalyzing its phosphorylation/dephosphorylation. Dark/light-induced changes in stromal concentrations of the competing ADP and Pi substrates govern the direction of the reaction. In the dark, phosphorylates the catalytic intermediate of PPDK (PPDK-HisP), inactivating it. Light exposure induces the phosphorolysis reaction that reactivates PPDK. The protein is Probable pyruvate, phosphate dikinase regulatory protein, chloroplastic (PDRP1) of Oryza sativa subsp. indica (Rice).